The chain runs to 1288 residues: 5-oxoprolinase (1288 aa).

Thr-151 is subject to Phosphothreonine. The disordered stretch occupies residues Pro-1248–Phe-1272. Ser-1265 is modified (phosphoserine).

Belongs to the oxoprolinase family. In terms of assembly, homodimer.

The protein resides in the cytoplasm. Its subcellular location is the cytosol. It catalyses the reaction 5-oxo-L-proline + ATP + 2 H2O = L-glutamate + ADP + phosphate + H(+). Functionally, catalyzes the cleavage of 5-oxo-L-proline to form L-glutamate coupled to the hydrolysis of ATP to ADP and inorganic phosphate. The polypeptide is 5-oxoprolinase (Homo sapiens (Human)).